A 786-amino-acid chain; its full sequence is Endonuclease MutS2 (786 aa).

332–339 (GPNTGGKT) lines the ATP pocket. The region spanning 711 to 786 (VDLRGMDSIE…GTGVTIVELK (76 aa)) is the Smr domain.

The protein belongs to the DNA mismatch repair MutS family. MutS2 subfamily. As to quaternary structure, homodimer. Binds to stalled ribosomes, contacting rRNA.

Endonuclease that is involved in the suppression of homologous recombination and thus may have a key role in the control of bacterial genetic diversity. Functionally, acts as a ribosome collision sensor, splitting the ribosome into its 2 subunits. Detects stalled/collided 70S ribosomes which it binds and splits by an ATP-hydrolysis driven conformational change. Acts upstream of the ribosome quality control system (RQC), a ribosome-associated complex that mediates the extraction of incompletely synthesized nascent chains from stalled ribosomes and their subsequent degradation. Probably generates substrates for RQC. The polypeptide is Endonuclease MutS2 (Clostridium kluyveri (strain NBRC 12016)).